The chain runs to 294 residues: Cytidine deaminase (294 aa).

2 CMP/dCMP-type deaminase domains span residues 48 to 168 and 186 to 294; these read DEDA…FGPK and LTGD…VLLA. 89–91 contributes to the substrate binding site; the sequence is NME. His-102 is a Zn(2+) binding site. The active-site Proton donor is Glu-104. Cys-129 and Cys-132 together coordinate Zn(2+).

Belongs to the cytidine and deoxycytidylate deaminase family. In terms of assembly, homodimer. Zn(2+) is required as a cofactor.

It catalyses the reaction cytidine + H2O + H(+) = uridine + NH4(+). It carries out the reaction 2'-deoxycytidine + H2O + H(+) = 2'-deoxyuridine + NH4(+). Functionally, this enzyme scavenges exogenous and endogenous cytidine and 2'-deoxycytidine for UMP synthesis. In Escherichia coli (strain ATCC 8739 / DSM 1576 / NBRC 3972 / NCIMB 8545 / WDCM 00012 / Crooks), this protein is Cytidine deaminase.